The primary structure comprises 2291 residues: Protein Ycf2 A (2291 aa).

1642–1649 (GSIGTGRS) serves as a coordination point for ATP.

Belongs to the Ycf2 family.

Its subcellular location is the plastid. The protein localises to the chloroplast stroma. Its function is as follows. Probable ATPase of unknown function. Its presence in a non-photosynthetic plant (Epifagus virginiana) and experiments in tobacco indicate that it has an essential function which is probably not related to photosynthesis. This is Protein Ycf2 A (ycf2-A) from Atropa belladonna (Belladonna).